A 268-amino-acid polypeptide reads, in one-letter code: Tryptophan synthase alpha chain (268 aa).

Residues glutamate 49 and aspartate 60 each act as proton acceptor in the active site.

Belongs to the TrpA family. In terms of assembly, tetramer of two alpha and two beta chains.

It catalyses the reaction (1S,2R)-1-C-(indol-3-yl)glycerol 3-phosphate + L-serine = D-glyceraldehyde 3-phosphate + L-tryptophan + H2O. Its pathway is amino-acid biosynthesis; L-tryptophan biosynthesis; L-tryptophan from chorismate: step 5/5. Its function is as follows. The alpha subunit is responsible for the aldol cleavage of indoleglycerol phosphate to indole and glyceraldehyde 3-phosphate. This Shigella boydii serotype 4 (strain Sb227) protein is Tryptophan synthase alpha chain.